A 662-amino-acid chain; its full sequence is Interferon-induced GTP-binding protein Mx1 (662 aa).

Met1 is modified (N-acetylmethionine). One can recognise a Dynamin-type G domain in the interval 67 to 340 (DLALPAIAVI…LITHICKSLP (274 aa)). The segment at 77 to 84 (GDQSSGKS) is G1 motif. Position 77-84 (77-84 (GDQSSGKS)) interacts with GTP. A G2 motif region spans residues 102-104 (VTR). Residues 178–181 (DLPG) form a G3 motif region. Residues 178 to 182 (DLPGI) and 247 to 250 (TKPD) each bind GTP. A G4 motif region spans residues 247–250 (TKPD). The tract at residues 279–282 (KCRG) is G5 motif. The tract at residues 341-366 (LLENQIRESHQRITEELQKYGVDVPE) is bundle signaling element (BSE). The segment at 366–533 (EDENEKMFFL…HFQMEQIVYC (168 aa)) is middle domain. Positions 367-632 (DENEKMFFLI…KDTYSWLLKE (266 aa)) are stalk. The segment at 554–557 (KKKK) is critical for lipid-binding. The GED domain maps to 574–662 (MEEIFQHLMA…ARRRLAQFPG (89 aa)).

This sequence belongs to the TRAFAC class dynamin-like GTPase superfamily. Dynamin/Fzo/YdjA family. In terms of assembly, homooligomer. Oligomerizes into multimeric filamentous or ring-like structures by virtue of its stalk domain. Oligomerization is critical for GTPase activity, protein stability, and recognition of viral target structures. Interacts with TRPC1, TRPC3, TRPC4, TRPC5, TRPC6 and TRPC7. Interacts with HSPA5. Interacts with TUBB/TUBB5. Interacts with DDX39A and DDX39B. Post-translationally, ISGylated.

The protein localises to the cytoplasm. It localises to the endoplasmic reticulum membrane. Its subcellular location is the perinuclear region. Interferon-induced dynamin-like GTPase with antiviral activity. This chain is Interferon-induced GTP-binding protein Mx1 (MX1), found in Pongo abelii (Sumatran orangutan).